Consider the following 196-residue polypeptide: Neuropeptide prohormone-4 (196 aa).

Positions 1 to 25 (MSSPLRMDVTFLLAAIAVTWVCGLK) are cleaved as a signal peptide. Residues 50-90 (DCDIASPFKCEESPTCLRLFQVCNGRWDCEHGSDEDNALCA) enclose the LDL-receptor class A domain. Intrachain disulfides connect Cys51/Cys65, Cys59/Cys78, and Cys72/Cys89.

Expressed by the venom duct.

Its subcellular location is the secreted. This is Neuropeptide prohormone-4 from Conus victoriae (Queen Victoria cone).